Consider the following 47-residue polypeptide: Rhodotorucin-A peptides type 3 (47 aa).

Positions 1–3 are excised as a propeptide; it reads MVA. The S-farnesyl cysteine moiety is linked to residue C14. Residues 15 to 18 constitute a propeptide that is removed on maturation; that stretch reads TVAK. Residue C29 is the site of S-farnesyl cysteine attachment. Positions 30-33 are excised as a propeptide; sequence TVSK. The S-farnesyl cysteine moiety is linked to residue C44. Residues 45 to 47 constitute a propeptide that is removed on maturation; the sequence is TVA.

Its subcellular location is the cell membrane. In terms of biological role, rhodotorucin-A is a mating pheromone in cells of mating type A of Rhodosporidium toruloides. This chain is Rhodotorucin-A peptides type 3 (RHA3), found in Rhodotorula toruloides (Yeast).